Consider the following 375-residue polypeptide: Lipid-A-disaccharide synthase (375 aa).

This sequence belongs to the LpxB family.

It carries out the reaction a lipid X + a UDP-2-N,3-O-bis[(3R)-3-hydroxyacyl]-alpha-D-glucosamine = a lipid A disaccharide + UDP + H(+). It functions in the pathway bacterial outer membrane biogenesis; LPS lipid A biosynthesis. Functionally, condensation of UDP-2,3-diacylglucosamine and 2,3-diacylglucosamine-1-phosphate to form lipid A disaccharide, a precursor of lipid A, a phosphorylated glycolipid that anchors the lipopolysaccharide to the outer membrane of the cell. The sequence is that of Lipid-A-disaccharide synthase from Pseudomonas entomophila (strain L48).